A 481-amino-acid chain; its full sequence is Endoplasmic reticulum lectin 1 (481 aa).

An N-terminal signal peptide occupies residues 1–27 (MRRSDRLRCAGASLLVVLCGVFRSSFG). MRH domains are found at residues 108–245 (SSCS…LCNH) and 340–467 (SYCF…ICKI). 6 disulfides stabilise this stretch: Cys110–Cys123, Cys198–Cys231, Cys214–Cys243, Cys342–Cys355, Cys419–Cys453, and Cys434–Cys465.

Its subcellular location is the endoplasmic reticulum lumen. In terms of biological role, probable lectin that binds selectively to improperly folded lumenal proteins. May function in endoplasmic reticulum quality control and endoplasmic reticulum-associated degradation (ERAD) of both non-glycosylated proteins and glycoproteins. The protein is Endoplasmic reticulum lectin 1 (erlec1) of Xenopus tropicalis (Western clawed frog).